The following is a 184-amino-acid chain: Adenine phosphoribosyltransferase (184 aa).

The protein belongs to the purine/pyrimidine phosphoribosyltransferase family. In terms of assembly, homodimer.

It is found in the cytoplasm. The catalysed reaction is AMP + diphosphate = 5-phospho-alpha-D-ribose 1-diphosphate + adenine. The protein operates within purine metabolism; AMP biosynthesis via salvage pathway; AMP from adenine: step 1/1. In terms of biological role, catalyzes a salvage reaction resulting in the formation of AMP, that is energically less costly than de novo synthesis. This is Adenine phosphoribosyltransferase from Corynebacterium diphtheriae (strain ATCC 700971 / NCTC 13129 / Biotype gravis).